We begin with the raw amino-acid sequence, 164 residues long: Protein-export protein SecB (164 aa).

The protein belongs to the SecB family. In terms of assembly, homotetramer, a dimer of dimers. One homotetramer interacts with 1 SecA dimer.

The protein resides in the cytoplasm. Functionally, one of the proteins required for the normal export of preproteins out of the cell cytoplasm. It is a molecular chaperone that binds to a subset of precursor proteins, maintaining them in a translocation-competent state. It also specifically binds to its receptor SecA. The sequence is that of Protein-export protein SecB from Stutzerimonas stutzeri (strain A1501) (Pseudomonas stutzeri).